Reading from the N-terminus, the 143-residue chain is Large ribosomal subunit protein uL11 (143 aa).

It belongs to the universal ribosomal protein uL11 family. Part of the ribosomal stalk of the 50S ribosomal subunit. Interacts with L10 and the large rRNA to form the base of the stalk. L10 forms an elongated spine to which L12 dimers bind in a sequential fashion forming a multimeric L10(L12)X complex. Post-translationally, one or more lysine residues are methylated.

Forms part of the ribosomal stalk which helps the ribosome interact with GTP-bound translation factors. The sequence is that of Large ribosomal subunit protein uL11 from Herminiimonas arsenicoxydans.